Here is a 199-residue protein sequence, read N- to C-terminus: Recombination protein RecR (199 aa).

A C4-type zinc finger spans residues 56–71 (CRSCFNVAQSELCRIC). The 96-residue stretch at 79–174 (SSICVVEEPK…KVTRLASGLP (96 aa)) folds into the Toprim domain.

This sequence belongs to the RecR family.

In terms of biological role, may play a role in DNA repair. It seems to be involved in an RecBC-independent recombinational process of DNA repair. It may act with RecF and RecO. This chain is Recombination protein RecR, found in Frankia casuarinae (strain DSM 45818 / CECT 9043 / HFP020203 / CcI3).